A 168-amino-acid polypeptide reads, in one-letter code: Probable acetolactate synthase small subunit (168 aa).

An ACT domain is found at 10–84 (IISALVEHKP…DVIKVRDLEP (75 aa)).

The protein belongs to the acetolactate synthase small subunit family. As to quaternary structure, dimer of large and small chains.

The catalysed reaction is 2 pyruvate + H(+) = (2S)-2-acetolactate + CO2. The protein operates within amino-acid biosynthesis; L-isoleucine biosynthesis; L-isoleucine from 2-oxobutanoate: step 1/4. Its pathway is amino-acid biosynthesis; L-valine biosynthesis; L-valine from pyruvate: step 1/4. The chain is Probable acetolactate synthase small subunit (ilvH) from Methanothermobacter thermautotrophicus (strain ATCC 29096 / DSM 1053 / JCM 10044 / NBRC 100330 / Delta H) (Methanobacterium thermoautotrophicum).